A 252-amino-acid polypeptide reads, in one-letter code: 5'-nucleotidase SurE (252 aa).

Residues Asp8, Asp9, Ser39, and Asn91 each coordinate a divalent metal cation.

The protein belongs to the SurE nucleotidase family. The cofactor is a divalent metal cation.

It localises to the cytoplasm. It catalyses the reaction a ribonucleoside 5'-phosphate + H2O = a ribonucleoside + phosphate. Functionally, nucleotidase that shows phosphatase activity on nucleoside 5'-monophosphates. The chain is 5'-nucleotidase SurE from Legionella pneumophila (strain Lens).